Here is a 275-residue protein sequence, read N- to C-terminus: Phosphonoacetaldehyde hydrolase (275 aa).

Asp15 serves as the catalytic Nucleophile. Asp15 and Ala17 together coordinate Mg(2+). Lys56 functions as the Schiff-base intermediate with substrate in the catalytic mechanism. Residue Asp189 coordinates Mg(2+).

The protein belongs to the HAD-like hydrolase superfamily. PhnX family. In terms of assembly, homodimer. The cofactor is Mg(2+).

It carries out the reaction phosphonoacetaldehyde + H2O = acetaldehyde + phosphate + H(+). Its function is as follows. Involved in phosphonate degradation. This is Phosphonoacetaldehyde hydrolase from Pseudomonas putida (Arthrobacter siderocapsulatus).